Here is a 648-residue protein sequence, read N- to C-terminus: Macrolide export ATP-binding/permease protein MacB 1 (648 aa).

The ABC transporter domain occupies 6-244 (LQLSGIRRHF…PAPTTSRADT (239 aa)). An ATP-binding site is contributed by 42–49 (GASGSGKS). A disordered region spans residues 222–248 (VVADRRREPTPPSPAPTTSRADTGGRG). The next 4 membrane-spanning stretches (helical) occupy residues 273–293 (FLTM…VALG), 521–541 (LTLL…IGVM), 578–598 (LVCL…GVLF), and 613–633 (AVLM…FFPA).

The protein belongs to the ABC transporter superfamily. Macrolide exporter (TC 3.A.1.122) family. As to quaternary structure, homodimer. Part of the tripartite efflux system MacAB-TolC, which is composed of an inner membrane transporter, MacB, a periplasmic membrane fusion protein, MacA, and an outer membrane component, TolC. The complex forms a large protein conduit and can translocate molecules across both the inner and outer membranes. Interacts with MacA.

It is found in the cell inner membrane. Its function is as follows. Part of the tripartite efflux system MacAB-TolC. MacB is a non-canonical ABC transporter that contains transmembrane domains (TMD), which form a pore in the inner membrane, and an ATP-binding domain (NBD), which is responsible for energy generation. Confers resistance against macrolides. The protein is Macrolide export ATP-binding/permease protein MacB 1 of Aeromonas hydrophila subsp. hydrophila (strain ATCC 7966 / DSM 30187 / BCRC 13018 / CCUG 14551 / JCM 1027 / KCTC 2358 / NCIMB 9240 / NCTC 8049).